The sequence spans 548 residues: Chaperonin GroEL (548 aa).

ATP is bound by residues 30–33 (TLGP), Lys-51, 87–91 (DGTTT), Gly-415, 479–481 (NAA), and Asp-495. The tract at residues 526-548 (REDKSSDVASSPAGGMGGMGGMM) is disordered. Positions 539–548 (GGMGGMGGMM) are enriched in gly residues.

Belongs to the chaperonin (HSP60) family. Forms a cylinder of 14 subunits composed of two heptameric rings stacked back-to-back. Interacts with the co-chaperonin GroES.

Its subcellular location is the cytoplasm. It catalyses the reaction ATP + H2O + a folded polypeptide = ADP + phosphate + an unfolded polypeptide.. Functionally, together with its co-chaperonin GroES, plays an essential role in assisting protein folding. The GroEL-GroES system forms a nano-cage that allows encapsulation of the non-native substrate proteins and provides a physical environment optimized to promote and accelerate protein folding. The protein is Chaperonin GroEL of Buchnera aphidicola subsp. Schizaphis graminum (strain Sg).